The following is a 213-amino-acid chain: Small ribosomal subunit protein uS3 (213 aa).

The KH type-2 domain occupies 38–106 (IRKYVKKTLY…EFSIEVNEIR (69 aa)).

It belongs to the universal ribosomal protein uS3 family. Part of the 30S ribosomal subunit. Forms a tight complex with proteins S10 and S14.

In terms of biological role, binds the lower part of the 30S subunit head. Binds mRNA in the 70S ribosome, positioning it for translation. This chain is Small ribosomal subunit protein uS3, found in Oleidesulfovibrio alaskensis (strain ATCC BAA-1058 / DSM 17464 / G20) (Desulfovibrio alaskensis).